We begin with the raw amino-acid sequence, 67 residues long: Ferredoxin (67 aa).

4Fe-4S ferredoxin-type domains follow at residues 3-31 (WKVS…MNDE) and 36-67 (PKVE…IEEA). 3 residues coordinate [4Fe-4S] cluster: cysteine 12, aspartate 15, and cysteine 18. Cysteine 22 and cysteine 49 are joined by a disulfide. Cysteine 57 contacts [4Fe-4S] cluster.

In terms of assembly, homodimer. The cofactor is [4Fe-4S] cluster. [3Fe-4S] cluster is required as a cofactor.

In terms of biological role, ferredoxins are iron-sulfur proteins that transfer electrons in a wide variety of metabolic reactions. The sequence is that of Ferredoxin (fdxA) from Pyrococcus furiosus (strain ATCC 43587 / DSM 3638 / JCM 8422 / Vc1).